The sequence spans 65 residues: U2-theraphotoxin-Pc1a (65 aa).

The signal sequence occupies residues 1-20; it reads MGFKLVLFIAVLTLVGSSNA. Positions 21–36 are excised as a propeptide; sequence EISAKMDSRDSPMIQE. 3 disulfide bridges follow: C39-C56, C46-C59, and C55-C64.

It belongs to the neurotoxin 36 family. 02 subfamily. In terms of tissue distribution, expressed by the venom gland.

It is found in the secreted. Its function is as follows. Possesses strong antiplasmodial activity against the intra-erythrocyte stage of P.falciparum in vitro. IC(50) for inhibiting P.falciparum growth is 1.15 uM. Specifically interacts with infected erythrocytes. Does not lyse erythrocytes, is not cytotoxic to nucleated mammalian cells, and does not inhibit neuromuscular function. Has neither antibacterial nor antifungal activity. This is U2-theraphotoxin-Pc1a from Psalmopoeus cambridgei (Trinidad chevron tarantula).